A 109-amino-acid chain; its full sequence is Large ribosomal subunit protein uL22 (109 aa).

This sequence belongs to the universal ribosomal protein uL22 family. Part of the 50S ribosomal subunit.

This protein binds specifically to 23S rRNA; its binding is stimulated by other ribosomal proteins, e.g. L4, L17, and L20. It is important during the early stages of 50S assembly. It makes multiple contacts with different domains of the 23S rRNA in the assembled 50S subunit and ribosome. Its function is as follows. The globular domain of the protein is located near the polypeptide exit tunnel on the outside of the subunit, while an extended beta-hairpin is found that lines the wall of the exit tunnel in the center of the 70S ribosome. This is Large ribosomal subunit protein uL22 from Herminiimonas arsenicoxydans.